A 440-amino-acid chain; its full sequence is MDLRPEIPPASQAGSQVHPGAAAAAAAAASIPVSMAGSLLRAPPLLLRATEKYPRTPKCARCRNHGVVSALKGHKRYCRWKDCMCAKCTLIAERQRVMAAQVALRRQQAQEENEARELQLLYGTAEGLALAAANGIIPPRQNYEVFGPVSNESNSGESNIQKFELFPKTPLPGTVTPHQAAGKSVSTDTESVPGMSSPDMRHGSGSENGDRESIVSSPIAKPLKDGEETPGSISPIGSDSGSDTDKDEQEPSPSSAASRQMNAIDILTRVFPNHKRSVLELVLQGCGKNVVQAIEQILNNSGQAKGPEETWTAERMLQSVQPTMSSTPRPMLPGTMTLSNRSAFSPLQPNAPHFGSDPSTYPLSTHLGLNPLRLAYSAHSRGLAFMAPYSTTGLMPTLGFRPPMDYAFSDLIRDRTLLHKDQSYTNGLYGPLVNNTQEKQ.

Positions 59–106 form a DNA-binding region, DM; that stretch reads CARCRNHGVVSALKGHKRYCRWKDCMCAKCTLIAERQRVMAAQVALRR. Positions 167 to 261 are disordered; sequence PKTPLPGTVT…SPSSAASRQM (95 aa). Residues 199–213 show a composition bias toward basic and acidic residues; that stretch reads DMRHGSGSENGDRES. The span at 229 to 241 shows a compositional bias: low complexity; the sequence is TPGSISPIGSDSG. Residues 251–261 are compositionally biased toward polar residues; the sequence is PSPSSAASRQM. Residues 261 to 296 enclose the DMA domain; that stretch reads MNAIDILTRVFPNHKRSVLELVLQGCGKNVVQAIEQ.

This sequence belongs to the DMRT family. Restrictively expressed in brain and developing germ cells, especially in spermatogonia, spermatocytes, spermatids, and sperm cells, and in developing oocytes, including early perinucleolus stage oocyte, late yolk vesicle stage oocyte, and oil drop stage oocyte.

The protein resides in the nucleus. May be involved in sexual development. The sequence is that of Doublesex- and mab-3-related transcription factor A2 (dmrta2) from Danio rerio (Zebrafish).